Here is a 171-residue protein sequence, read N- to C-terminus: S-ribosylhomocysteine lyase (171 aa).

The Fe cation site is built by H54, H58, and C128.

This sequence belongs to the LuxS family. Homodimer. It depends on Fe cation as a cofactor.

It carries out the reaction S-(5-deoxy-D-ribos-5-yl)-L-homocysteine = (S)-4,5-dihydroxypentane-2,3-dione + L-homocysteine. Functionally, involved in the synthesis of autoinducer 2 (AI-2) which is secreted by bacteria and is used to communicate both the cell density and the metabolic potential of the environment. The regulation of gene expression in response to changes in cell density is called quorum sensing. Catalyzes the transformation of S-ribosylhomocysteine (RHC) to homocysteine (HC) and 4,5-dihydroxy-2,3-pentadione (DPD). The chain is S-ribosylhomocysteine lyase from Campylobacter concisus (strain 13826).